The sequence spans 245 residues: MAGHSQFANIKHRKGAQDAKRAKLFTKLRKEIIVAARSGSPVPELNPNLRSAIASAKAFNLPKDRIEAAIRSAQGNEADDSYEEITYEGYGPGSVAIVVHALSNNRNRTAGELRHIFTRHGGKLGERGSISYLFDHVGLIVYGAAQVGSFDVIFDEATSLGAIDLEEHDNGEEKEYHVICQVEDFGRIRDALYEKFSDGVTARLSWRPKQKVKPASDEASAKLISFLNDLDDNDDVQYVEGDFEL.

The protein belongs to the TACO1 family.

Its subcellular location is the cytoplasm. The protein is Probable transcriptional regulatory protein APH_0480 of Anaplasma phagocytophilum (strain HZ).